A 181-amino-acid polypeptide reads, in one-letter code: Large ribosomal subunit protein bL17 (181 aa).

Residues 129 to 181 are disordered; the sequence is AEKSEKSAKTAKAAKAPAKKATAKKASTKAVAAKKKAVKKAQKKDRAASAARA. A compositionally biased stretch (basic residues) spans 145–171; the sequence is PAKKATAKKASTKAVAAKKKAVKKAQK.

It belongs to the bacterial ribosomal protein bL17 family. Part of the 50S ribosomal subunit. Contacts protein L32.

This chain is Large ribosomal subunit protein bL17, found in Bdellovibrio bacteriovorus (strain ATCC 15356 / DSM 50701 / NCIMB 9529 / HD100).